Reading from the N-terminus, the 217-residue chain is Large ribosomal subunit protein bL25 (217 aa).

The tract at residues 178–217 (VVAPTEEPTEEEIEAMEGEQQTEEPEVVGESKEDEEKTEE) is disordered. The span at 184–205 (EPTEEEIEAMEGEQQTEEPEVV) shows a compositional bias: acidic residues. Residues 206 to 217 (GESKEDEEKTEE) are compositionally biased toward basic and acidic residues.

It belongs to the bacterial ribosomal protein bL25 family. CTC subfamily. Part of the 50S ribosomal subunit; part of the 5S rRNA/L5/L18/L25 subcomplex. Contacts the 5S rRNA. Binds to the 5S rRNA independently of L5 and L18.

In terms of biological role, this is one of the proteins that binds to the 5S RNA in the ribosome where it forms part of the central protuberance. The chain is Large ribosomal subunit protein bL25 from Staphylococcus aureus (strain MRSA252).